The primary structure comprises 194 residues: Putative manganese efflux pump MntP (194 aa).

6 helical membrane-spanning segments follow: residues Pro-3–Gly-23, Leu-37–Leu-57, Asp-69–Leu-89, Leu-110–Phe-132, Cys-147–Gly-167, and Met-172–Gly-192.

The protein belongs to the MntP (TC 9.B.29) family.

The protein resides in the cell inner membrane. Its function is as follows. Probably functions as a manganese efflux pump. In Xanthomonas axonopodis pv. citri (strain 306), this protein is Putative manganese efflux pump MntP.